Reading from the N-terminus, the 282-residue chain is Nucleotide-binding protein XAC2976 (282 aa).

5–12 is an ATP binding site; sequence GLSGSGKS. 57–60 contributes to the GTP binding site; that stretch reads DVRS.

Belongs to the RapZ-like family.

Functionally, displays ATPase and GTPase activities. In Xanthomonas axonopodis pv. citri (strain 306), this protein is Nucleotide-binding protein XAC2976.